Consider the following 143-residue polypeptide: uncharacterized protein (143 aa).

Residues 35-59 (ITKDRGDRDDGRYGEPRIQRKPGQL) are disordered. Residues 36–52 (TKDRGDRDDGRYGEPRI) show a composition bias toward basic and acidic residues.

This is an uncharacterized protein from Streptomyces fradiae (Streptomyces roseoflavus).